The primary structure comprises 441 residues: Ribulose bisphosphate carboxylase large chain (441 aa).

The residue at position 5 (K5) is an N6,N6,N6-trimethyllysine. N114 and T164 together coordinate substrate. K166 acts as the Proton acceptor in catalysis. A substrate-binding site is contributed by K168. The Mg(2+) site is built by K192, D194, and E195. The residue at position 192 (K192) is an N6-carboxylysine. H285 (proton acceptor) is an active-site residue. Residues R286, H318, and S370 each contribute to the substrate site.

The protein belongs to the RuBisCO large chain family. Type I subfamily. Heterohexadecamer of 8 large chains and 8 small chains; disulfide-linked. The disulfide link is formed within the large subunit homodimers. The cofactor is Mg(2+). The disulfide bond which can form in the large chain dimeric partners within the hexadecamer appears to be associated with oxidative stress and protein turnover.

It is found in the plastid. The protein localises to the chloroplast. It carries out the reaction 2 (2R)-3-phosphoglycerate + 2 H(+) = D-ribulose 1,5-bisphosphate + CO2 + H2O. The catalysed reaction is D-ribulose 1,5-bisphosphate + O2 = 2-phosphoglycolate + (2R)-3-phosphoglycerate + 2 H(+). Its function is as follows. RuBisCO catalyzes two reactions: the carboxylation of D-ribulose 1,5-bisphosphate, the primary event in carbon dioxide fixation, as well as the oxidative fragmentation of the pentose substrate in the photorespiration process. Both reactions occur simultaneously and in competition at the same active site. The protein is Ribulose bisphosphate carboxylase large chain of Glycyrrhiza echinata (Licorice).